We begin with the raw amino-acid sequence, 332 residues long: 2-oxoglutarate-dependent dioxygenase FG08081 (332 aa).

A Fe2OG dioxygenase domain is found at 176-280 (RSKSTLYFLH…RYSISYFLRA (105 aa)). Residues His-201, Asp-203, and His-258 each coordinate Fe cation. Residue Arg-271 coordinates 2-oxoglutarate.

The protein belongs to the iron/ascorbate-dependent oxidoreductase family. Fe(2+) serves as cofactor.

It participates in mycotoxin biosynthesis. Functionally, 2-oxoglutarate-dependent dioxygenase; part of the gene cluster that mediates the biosynthesis of butenolide, a mycotoxin that shows antibiotic activity but does not seem to play a major role in the spread of head blight in wheat. Butenolide is derived from glutamic acid via a 4-acetamido-2-butenoic acid intermediate. The predicted function of the NADH:flavin oxidoreductase FG08077, the cytochrome P450 monooxygenase FG08079, the decarboxylase FG08083, and the putative acetyltransferase FG08082 are consistent with this pathway, however, the respective activities of the butelonide biosynthesis cluster enzymes have still to be experimentally determined. This Gibberella zeae (strain ATCC MYA-4620 / CBS 123657 / FGSC 9075 / NRRL 31084 / PH-1) (Wheat head blight fungus) protein is 2-oxoglutarate-dependent dioxygenase FG08081.